The primary structure comprises 146 residues: Hemoglobin subunit beta (146 aa).

The Globin domain occupies 2-146; sequence HWTETERATI…VVAALSREYH (145 aa). Residues histidine 63 and histidine 92 each contribute to the heme b site.

It belongs to the globin family. As to quaternary structure, heterotetramer of two alpha chains and two beta chains (an easy dimerization is also reported). Red blood cells.

Involved in oxygen transport from the lung to the various peripheral tissues. This chain is Hemoglobin subunit beta (HBB), found in Latimeria chalumnae (Coelacanth).